The primary structure comprises 189 residues: MEQIDKQKIADAVKVILEAVGENPDREGLIDTPMRVARMYEEVFAGLKKDPSVHFDTIFEEQHEELVLVKDIRFSSMCEHHLVPFFGVAHVAYLPQNGRVAGLSKLARVVDDVSRRPQLQERITTTVAEIMMDKLKPLGVMVIMEAEHMCMTIRGVNKPGTKTITSAVRGAFKNDDKLRSEVLALIKHN.

Residues C78, H81, and C150 each coordinate Zn(2+).

Belongs to the GTP cyclohydrolase I family. As to quaternary structure, homomer.

The catalysed reaction is GTP + H2O = 7,8-dihydroneopterin 3'-triphosphate + formate + H(+). It participates in cofactor biosynthesis; 7,8-dihydroneopterin triphosphate biosynthesis; 7,8-dihydroneopterin triphosphate from GTP: step 1/1. This is GTP cyclohydrolase 1 from Listeria monocytogenes serotype 4a (strain HCC23).